The following is a 118-amino-acid chain: uncharacterized protein (118 aa).

Positions 1–12 (MADDNVSFTDQG) are enriched in polar residues. Positions 1 to 63 (MADDNVSFTD…KKGKTKKVRK (63 aa)) are disordered. The span at 39–63 (TKKKGKKNKKSKKKAKKGKTKKVRK) shows a compositional bias: basic residues. A helical membrane pass occupies residues 81–101 (FCAGIIVAMIMLFVIIIYGII).

It is found in the membrane. This is an uncharacterized protein from Caenorhabditis elegans.